A 193-amino-acid polypeptide reads, in one-letter code: Probable nicotinate-nucleotide adenylyltransferase (193 aa).

This sequence belongs to the NadD family.

It carries out the reaction nicotinate beta-D-ribonucleotide + ATP + H(+) = deamido-NAD(+) + diphosphate. Its pathway is cofactor biosynthesis; NAD(+) biosynthesis; deamido-NAD(+) from nicotinate D-ribonucleotide: step 1/1. Catalyzes the reversible adenylation of nicotinate mononucleotide (NaMN) to nicotinic acid adenine dinucleotide (NaAD). The chain is Probable nicotinate-nucleotide adenylyltransferase from Coprothermobacter proteolyticus (strain ATCC 35245 / DSM 5265 / OCM 4 / BT).